The primary structure comprises 460 residues: Endoglucanase 2 (460 aa).

The signal sequence occupies residues 1 to 32; it reads MIKGSSLKRIKSLVMMAIFSVSIITTAIVSSA. The active-site Proton donor is Glu-99. The active-site Nucleophile is the Asp-155. The region spanning 400-460 is the Dockerin domain; it reads QQGLKGDVNN…FAQLKVKLLN (61 aa).

This sequence belongs to the glycosyl hydrolase 8 (cellulase D) family.

It carries out the reaction Endohydrolysis of (1-&gt;4)-beta-D-glucosidic linkages in cellulose, lichenin and cereal beta-D-glucans.. This chain is Endoglucanase 2 (celB), found in Ruminiclostridium josui (Clostridium josui).